Reading from the N-terminus, the 96-residue chain is MDYTQILVKPLVSEKATFVKEQAQQVVFFVNPRANKIEIKKAVEAAFKVKVTDVNVITKKPSDKVRQGRVVGRISGCKKAYVTLAPGEKIEFFEGV.

It belongs to the universal ribosomal protein uL23 family. In terms of assembly, part of the 50S ribosomal subunit. Contacts protein L29, and trigger factor when it is bound to the ribosome.

Its function is as follows. One of the early assembly proteins it binds 23S rRNA. One of the proteins that surrounds the polypeptide exit tunnel on the outside of the ribosome. Forms the main docking site for trigger factor binding to the ribosome. This chain is Large ribosomal subunit protein uL23, found in Nitratidesulfovibrio vulgaris (strain DSM 19637 / Miyazaki F) (Desulfovibrio vulgaris).